Here is a 523-residue protein sequence, read N- to C-terminus: Cytochrome b5 reductase 4 (523 aa).

Residues 54 to 130 (LIDVTEEELA…LKECLIGRMA (77 aa)) form the Cytochrome b5 heme-binding domain. Residues His-89 and His-112 each coordinate heme. A CS domain is found at 167–258 (ESHPWYDWFQ…KEPVSWKSLG (92 aa)). Positions 275 to 387 (LYYRKCRLAS…SNPQGTFSSF (113 aa)) constitute an FAD-binding FR-type domain. FAD is bound by residues 367 to 382 (ENLT…NPQG) and 394 to 426 (DVFL…KAKL).

Belongs to the flavoprotein pyridine nucleotide cytochrome reductase family. The cofactor is FAD.

The protein localises to the endoplasmic reticulum. It catalyses the reaction 2 Fe(III)-[cytochrome b5] + NADH = 2 Fe(II)-[cytochrome b5] + NAD(+) + H(+). In terms of biological role, NADH-cytochrome b5 reductase involved in endoplasmic reticulum stress response pathway. In Xenopus tropicalis (Western clawed frog), this protein is Cytochrome b5 reductase 4 (cyb5r4).